The primary structure comprises 209 residues: Ribosomal RNA large subunit methyltransferase E (209 aa).

The S-adenosyl-L-methionine site is built by Gly-63, Trp-65, Asp-83, Asp-99, and Asp-124. Lys-164 serves as the catalytic Proton acceptor.

This sequence belongs to the class I-like SAM-binding methyltransferase superfamily. RNA methyltransferase RlmE family.

It is found in the cytoplasm. It catalyses the reaction uridine(2552) in 23S rRNA + S-adenosyl-L-methionine = 2'-O-methyluridine(2552) in 23S rRNA + S-adenosyl-L-homocysteine + H(+). Functionally, specifically methylates the uridine in position 2552 of 23S rRNA at the 2'-O position of the ribose in the fully assembled 50S ribosomal subunit. This Shewanella woodyi (strain ATCC 51908 / MS32) protein is Ribosomal RNA large subunit methyltransferase E.